Here is a 170-residue protein sequence, read N- to C-terminus: Adenine phosphoribosyltransferase (170 aa).

This sequence belongs to the purine/pyrimidine phosphoribosyltransferase family. As to quaternary structure, homodimer.

Its subcellular location is the cytoplasm. The catalysed reaction is AMP + diphosphate = 5-phospho-alpha-D-ribose 1-diphosphate + adenine. It participates in purine metabolism; AMP biosynthesis via salvage pathway; AMP from adenine: step 1/1. Its function is as follows. Catalyzes a salvage reaction resulting in the formation of AMP, that is energically less costly than de novo synthesis. In Halothermothrix orenii (strain H 168 / OCM 544 / DSM 9562), this protein is Adenine phosphoribosyltransferase.